A 166-amino-acid polypeptide reads, in one-letter code: Ribosome maturation factor RimP (166 aa).

The protein belongs to the RimP family.

The protein resides in the cytoplasm. Required for maturation of 30S ribosomal subunits. The protein is Ribosome maturation factor RimP of Rickettsia akari (strain Hartford).